The following is a 120-amino-acid chain: MKWNPLIPFLLIAVLGIGLTFFLSVKGLDDSREIASGGESKSAEKKDANASPEEIYKANCIACHGENYEGVSGPSLKGVGDKKDVAEIKTKIEKGGNGMPSGLVPADKLDDMAEWVSKIK.

The helical transmembrane segment at 5 to 25 (PLIPFLLIAVLGIGLTFFLSV) threads the bilayer. Over 26–120 (KGLDDSREIA…DMAEWVSKIK (95 aa)) the chain is Periplasmic. Residues Cys-60, Cys-63, His-64, and Met-99 each contribute to the heme c site.

In terms of processing, binds 1 heme c group covalently per subunit.

It is found in the cell membrane. In terms of biological role, not essential for growth on minimal or rich media. This chain is Cytochrome c-550 (cccA), found in Bacillus subtilis (strain 168).